The following is an 88-amino-acid chain: Large ribosomal subunit protein eL31 (88 aa).

The protein belongs to the eukaryotic ribosomal protein eL31 family.

The protein is Large ribosomal subunit protein eL31 (rpl31e) of Archaeoglobus fulgidus (strain ATCC 49558 / DSM 4304 / JCM 9628 / NBRC 100126 / VC-16).